Consider the following 946-residue polypeptide: Protein translocase subunit SecA (946 aa).

ATP is bound by residues Q89, 107-111, and D508; that span reads GEGKT. The tract at residues 534-569 is disordered; sequence PEDSHKPPVPLQRRKDSSVGFGKEENNSKDKKVNHS. Positions 546–569 are enriched in basic and acidic residues; sequence RRKDSSVGFGKEENNSKDKKVNHS.

This sequence belongs to the SecA family. Monomer and homodimer. Part of the essential Sec protein translocation apparatus which comprises SecA, SecYEG and auxiliary proteins SecDF. Other proteins may also be involved.

It is found in the cell inner membrane. The protein resides in the cellular thylakoid membrane. The protein localises to the cytoplasm. It catalyses the reaction ATP + H2O + cellular proteinSide 1 = ADP + phosphate + cellular proteinSide 2.. In terms of biological role, part of the Sec protein translocase complex. Interacts with the SecYEG preprotein conducting channel. Has a central role in coupling the hydrolysis of ATP to the transfer of proteins into and across the cell membrane, serving as an ATP-driven molecular motor driving the stepwise translocation of polypeptide chains across the membrane. Functionally, probably participates in protein translocation into and across both the cytoplasmic and thylakoid membranes in cyanobacterial cells. This chain is Protein translocase subunit SecA, found in Prochlorococcus marinus (strain SARG / CCMP1375 / SS120).